A 377-amino-acid polypeptide reads, in one-letter code: UDP-N-acetylenolpyruvoylglucosamine reductase (377 aa).

One can recognise an FAD-binding PCMH-type domain in the interval 48–215 (LGGTPMAAVR…LGITLQLHTD (168 aa)). The active site involves Arg193. The Proton donor role is filled by Ser268. Glu369 is an active-site residue.

The protein belongs to the MurB family. Requires FAD as cofactor.

The protein localises to the cytoplasm. The catalysed reaction is UDP-N-acetyl-alpha-D-muramate + NADP(+) = UDP-N-acetyl-3-O-(1-carboxyvinyl)-alpha-D-glucosamine + NADPH + H(+). It participates in cell wall biogenesis; peptidoglycan biosynthesis. In terms of biological role, cell wall formation. In Corynebacterium diphtheriae (strain ATCC 700971 / NCTC 13129 / Biotype gravis), this protein is UDP-N-acetylenolpyruvoylglucosamine reductase.